The following is a 501-amino-acid chain: MLAATGSLLATIWAALHPRTLLVAAVTFLLLADYFKNRRPKNYPPGPWGLPFVGNIFQLDFGQPHLSIQPLVKKYGNIFSLNLGDITSVVITGLPLIKEALTQMEQNIMNRPLSVMQERISNKNGLIFSSGQIWKEQRRFALMTLRNFGLGKKSLEERMQEEASHLVEAIREEEGKPFNPHFSINNAVSNIICSVTFGERFDYHDSRFQEMLRLLDEVMYLETTMISQLYNIFPWIMKYIPGSHQKVFRNWEKLKLFVSCMIDDHRKDWNPDEPRDFIDAFLKEMTKYPEKTTSFNEENLICSTLDLFFAGTETTSTTLRWALLYMALYPEVQEKVQAEIDRVIGQKRAARLADRESMPYTNAVIHEVQRMGNIIPLNVPREVAMDTNLNGFHLPKGTMVLTNLTALHRDPKEWATPDVFNPEHFLENGQFKKRESFLPFSMGKRACLGEQLARSELFIFFTSLMQKFTFNPPINEKLSPKFRNGLTLSPVSHRICAVPRQ.

Heme is bound at residue C447.

This sequence belongs to the cytochrome P450 family. Requires heme as cofactor.

It localises to the endoplasmic reticulum membrane. The protein resides in the microsome membrane. It catalyses the reaction an organic molecule + reduced [NADPH--hemoprotein reductase] + O2 = an alcohol + oxidized [NADPH--hemoprotein reductase] + H2O + H(+). This is Cytochrome P450 2J6 (Cyp2j6) from Mus musculus (Mouse).